The primary structure comprises 1337 residues: Zinc finger protein 335 (1337 aa).

Disordered regions lie at residues 1-108 and 198-226; these read MEEN…LVHS and GPTS…PPAP. Composition is skewed to low complexity over residues 31 to 45 and 54 to 63; these read TSEA…AATV and SGVGQSSDGG. Residues 248–271 form a C2H2-type 1 zinc finger; sequence FKCKMCQYRSSTKATLLRHMRERH. A disordered region spans residues 278–444; it reads AAAAATGKRG…PPRRRGRPSR (167 aa). The segment covering 302 to 332 has biased composition (acidic residues); that stretch reads DRPEEEEEDDDIVDAGAIDDLEEDSDYNPAE. The segment covering 351-362 has biased composition (basic residues); that stretch reads RPRRRPGRPRKL. Basic and acidic residues predominate over residues 363–372; the sequence is PRLETSDLHD. The segment covering 378–388 has biased composition (polar residues); the sequence is LVSSQSTQSPP. 8 C2H2-type zinc fingers span residues 466 to 488, 496 to 518, 524 to 546, 563 to 585, 591 to 613, 622 to 644, 650 to 673, and 679 to 702; these read YLCR…VNSH, FRCL…MFNH, YKCD…AAVH, FPCP…MKTH, HMCD…LLTH, FKCE…QLSH, FKCS…AVKH, and FACE…RCRH. 2 disordered regions span residues 733–767 and 963–999; these read LKQQ…TPPL and QCGG…ASHT. The segment covering 741–756 has biased composition (pro residues); it reads PGPPLSSPGPEAPQEP. S976 and S1007 each carry phosphoserine. 4 C2H2-type zinc fingers span residues 1019–1041, 1047–1069, 1075–1097, and 1103–1126; these read FSCK…KRAH, FKCP…MAQH, HQCN…MLTH, and FSCH…QRLH. K1022 participates in a covalent cross-link: Glycyl lysine isopeptide (Lys-Gly) (interchain with G-Cter in SUMO2). S1149 is subject to Phosphoserine.

Belongs to the krueppel C2H2-type zinc-finger protein family. In terms of assembly, interacts with NCOA6; may enhance ligand-dependent transcriptional activation by nuclear hormone receptors. Interacts with CNOT6. Interacts with CNOT9; the interaction is direct. Component of a nuclear receptor-mediated transcription complex composed of at least ZNF335, CCAR2 and EMSY; the complex stimulates the transcription of nuclear receptor target genes such as SOX9 and HOXA1. Within the complex interacts with EMSY and interacts (via C-terminus) with CCAR2. Interacts with members of histone H3'Lys4'(H3K4) methyltransferase complexes ASH2L, CXXC1, KMT2A/MLL1, RBBP5, SETD1A and WDR5. Component of a histone methylation complex composed of at least ZNF335, RBBP5, ASH2L and WDR5; the complex may have histone H3-specific methyltransferase activity, however does not have specificity for 'Lys-4' of histone H3. Interacts with RBBP5 and WDR5. Interacts with ASHL2. Components of this complex may associate with components of the ZNF335-CCAR2-EMSY nuclear receptor-mediated transcription complex to form a complex at least composed of ZNF335, HCFC1, CCAR2, EMSY, MKI67, RBBP5, ASH2L and WDR5. Within this complex also interacts with HCFC1 and MKI67. In terms of tissue distribution, expressed at low levels in cerebral cortex, hippocampus and cerebellum (at protein level).

The protein resides in the nucleus. Component or associated component of some histone methyltransferase complexes may regulate transcription through recruitment of those complexes on gene promoters. Enhances ligand-dependent transcriptional activation by nuclear hormone receptors. Plays an important role in neural progenitor cell proliferation and self-renewal through the regulation of specific genes involved brain development, including REST. Also controls the expression of genes involved in somatic development and regulates, for instance, lymphoblast proliferation. The protein is Zinc finger protein 335 (Znf335) of Mus musculus (Mouse).